The following is a 638-amino-acid chain: Epithelial sodium channel subunit beta (638 aa).

The Cytoplasmic segment spans residues 1–50 (MPVKKYLLKCLHRLQKGPGYTYKELLVWYCNNTNTHGPKRIICEGPKKKA). Residues 51–71 (MWFLLTLLFACLVCWQWGVFI) form a helical membrane-spanning segment. Over 72–530 (QTYLSWEVSV…GGQFGFWMGG (459 aa)) the chain is Extracellular. Cystine bridges form between Cys98-Cys270, Cys182-Cys187, Cys194-Cys201, Cys247-Cys254, Cys359-Cys446, Cys384-Cys442, Cys388-Cys438, Cys397-Cys424, and Cys399-Cys413. Residues Asn135 and Asn141 are each glycosylated (N-linked (GlcNAc...) asparagine). The N-linked (GlcNAc...) asparagine glycan is linked to Asn205. A helical membrane pass occupies residues 531 to 551 (SVLCLIEFGEIIIDFIWITII). Topologically, residues 552–638 (KLVASCKGLR…MESDSEVEAI (87 aa)) are cytoplasmic. The tract at residues 594–620 (SCRPHGEVYPDQQTLPIPGTPPPNYDS) is disordered. The short motif at 614 to 618 (PPPNY) is the PY motif; recruits WW domain-containing proteins and is thereby required for ubiquitination and inhibition of the channel by NEDD4 and NEDD4L element. Phosphoserine is present on residues Ser631 and Ser633.

This sequence belongs to the amiloride-sensitive sodium channel (TC 1.A.6) family. SCNN1B subfamily. Component of the heterotrimeric epithelial sodium channel (ENaC) composed of an alpha/SCNN1A, a beta/SCNN1B and a gamma/SCNN1G subunit. Interacts with WWP1 (via WW domains). Interacts with WWP2 (via WW domains); inhibits the channel. Interacts with the full-length immature form of PCSK9 (pro-PCSK9). Interacts (N-glycosylated) with BPIFA1; the interaction is direct and inhibits the proteolytic processing of SCNN1A and SCNN1G and the activation of ENaC. Post-translationally, ubiquitinated. Can be ubiquitinated at multiple sites and undergo monoubiquitination and polyubiquitination. Ubiquitination by NEDD4 or NEDD4L inhibits the ENaC channel through endocytosis, intracellular retention and degradation of its individual subunits. However, some studies could not confirm the ubiquitination of this subunit of the ENaC. N-glycosylated. N-glycosylation is required for interaction with BPIFA1. In terms of processing, phosphorylated on serine and threonine residues. Aldosterone and insulin increase the basal level of phosphorylation. Lung and kidney.

The protein resides in the apical cell membrane. Its subcellular location is the cytoplasmic vesicle membrane. It catalyses the reaction Na(+)(in) = Na(+)(out). Originally identified and characterized by its inhibition by the diuretic drug amiloride. This is one of the three pore-forming subunits of the heterotrimeric epithelial sodium channel (ENaC), a critical regulator of sodium balance and fluid homeostasis. ENaC operates in epithelial tissues, where it mediates the electrodiffusion of sodium ions from extracellular fluid through the apical membrane of cells, with water following osmotically. It plays a key role in maintaining sodium homeostasis through electrogenic sodium reabsorption in the kidneys. This subunit is not essential for ENaC function in airway surface liquid homeostasis and proper mucus clearance. The protein is Epithelial sodium channel subunit beta of Mus musculus (Mouse).